Reading from the N-terminus, the 405-residue chain is PP2A regulatory subunit TAP46 (405 aa).

Disordered stretches follow at residues 159–189 (ERRG…SEEE) and 352–405 (ATTS…TPCG). Over residues 165-174 (TKASALSTPV) the composition is skewed to polar residues. Composition is skewed to acidic residues over residues 176-189 (SGED…SEEE) and 367-377 (EDEEDDDEDEE). The segment covering 378 to 393 (AVMKARAFDDWKDDNP) has biased composition (basic and acidic residues).

This sequence belongs to the IGBP1/TAP42 family. Interacts with the 36 kDa catalytic subunit (subunit C) of PP2A. Interacts with PP2A1 and PP2A2. Interacts with PP2A3, PPX1 and FYPP1. Interacts with FYPP3 and ABI5. Interacts with ATPK1/S6K1 and ATPK2/S6K2. Interacts with TIP41L. Phosphorylated by TOR kinase in vitro. As to expression, ubiquitous. Highly expressed in seed, and particularly in the embryo.

Functionally, involved in the positive regulation of the TOR signaling pathway. Acts as a negative regulator of PP2A catalytic activity. Plays a positive role in the ABA-regulated inhibition of germination, probably throught its interaction with ABI5. The sequence is that of PP2A regulatory subunit TAP46 from Arabidopsis thaliana (Mouse-ear cress).